The following is a 223-amino-acid chain: Thymidylate kinase (223 aa).

7 to 14 contributes to the ATP binding site; sequence GIDGAGKS.

The protein belongs to the thymidylate kinase family.

It catalyses the reaction dTMP + ATP = dTDP + ADP. In terms of biological role, phosphorylation of dTMP to form dTDP in both de novo and salvage pathways of dTTP synthesis. The polypeptide is Thymidylate kinase (Prosthecochloris aestuarii (strain DSM 271 / SK 413)).